A 207-amino-acid chain; its full sequence is Large ribosomal subunit protein uL4 (207 aa).

A compositionally biased stretch (polar residues) spans 43–52 (NKRQGTQSAK). The segment at 43 to 72 (NKRQGTQSAKTRAEVRGGGRKPWKQKGTGR) is disordered. Positions 60–71 (GGRKPWKQKGTG) are enriched in basic residues.

Belongs to the universal ribosomal protein uL4 family. As to quaternary structure, part of the 50S ribosomal subunit.

In terms of biological role, one of the primary rRNA binding proteins, this protein initially binds near the 5'-end of the 23S rRNA. It is important during the early stages of 50S assembly. It makes multiple contacts with different domains of the 23S rRNA in the assembled 50S subunit and ribosome. Its function is as follows. Forms part of the polypeptide exit tunnel. The protein is Large ribosomal subunit protein uL4 of Alkaliphilus metalliredigens (strain QYMF).